Consider the following 238-residue polypeptide: Cadherin-2 (238 aa).

Cadherin domains follow at residues 1–46 (TKPL…RPEF), 47–161 (LHQV…PPEF), and 162–238 (TAMT…RMFV). The Extracellular segment spans residues 1 to 238 (TKPLDRELIA…IDFETNRMFV (238 aa)). Asp5, Glu7, Asp38, Met39, Asn40, Asp41, and Asn42 together coordinate Ca(2+). Residue Asn52 is glycosylated (N-linked (GlcNAc...) asparagine). Positions 72, 74, and 80 each coordinate Ca(2+). N-linked (GlcNAc...) asparagine glycosylation occurs at Asn104. Asp132 serves as a coordination point for Ca(2+). Asn181 carries an N-linked (GlcNAc...) asparagine glycan.

Homodimer (via extracellular region). Can also form heterodimers with other cadherins (via extracellular region). Dimerization occurs in trans, i.e. with a cadherin chain from another cell. Interacts with CDCP1. Interacts with PCDH8; this complex may also include TAOK2. The interaction with PCDH8 may lead to internalization through TAOK2/p38 MAPK pathway. Identified in a complex containing FGFR4, NCAM1, CDH2, PLCG1, FRS2, SRC, SHC1, GAP43 and CTTN. May interact with OBSCN (via protein kinase domain 2). Cleaved by MMP24. Ectodomain cleavage leads to the generation of a soluble 90 kDa N-terminal soluble fragment and a 45 kDa membrane-bound C-terminal fragment 1 (CTF1), which is further cleaved by gamma-secretase into a 35 kDa. Cleavage in neural stem cells by MMP24 affects CDH2-mediated anchorage of neural stem cells to ependymocytes in the adult subependymal zone, leading to modulate neural stem cell quiescence. In terms of processing, may be phosphorylated by OBSCN.

Its subcellular location is the cell membrane. It localises to the sarcolemma. It is found in the cell junction. The protein localises to the cell surface. The protein resides in the desmosome. Its subcellular location is the adherens junction. Calcium-dependent cell adhesion protein; preferentially mediates homotypic cell-cell adhesion by dimerization with a CDH2 chain from another cell. Cadherins may thus contribute to the sorting of heterogeneous cell types. Acts as a regulator of neural stem cells quiescence by mediating anchorage of neural stem cells to ependymocytes in the adult subependymal zone: upon cleavage by MMP24, CDH2-mediated anchorage is affected, leading to modulate neural stem cell quiescence. Plays a role in cell-to-cell junction formation between pancreatic beta cells and neural crest stem (NCS) cells, promoting the formation of processes by NCS cells. Required for proper neurite branching. Required for pre- and postsynaptic organization. CDH2 may be involved in neuronal recognition mechanism. In hippocampal neurons, may regulate dendritic spine density. The chain is Cadherin-2 (CDH2) from Cricetulus griseus (Chinese hamster).